An 840-amino-acid polypeptide reads, in one-letter code: Leucine--tRNA ligase (840 aa).

The 'HIGH' region signature appears at 44–55 (PYPSANGLHVGH). The 'KMSKS' region signature appears at 617 to 621 (KMSKS). Residue K620 coordinates ATP.

The protein belongs to the class-I aminoacyl-tRNA synthetase family.

Its subcellular location is the cytoplasm. It carries out the reaction tRNA(Leu) + L-leucine + ATP = L-leucyl-tRNA(Leu) + AMP + diphosphate. This chain is Leucine--tRNA ligase, found in Borreliella burgdorferi (strain ATCC 35210 / DSM 4680 / CIP 102532 / B31) (Borrelia burgdorferi).